The following is a 373-amino-acid chain: Ubiquitin domain-containing protein DSK2 (373 aa).

Residues 1 to 76 enclose the Ubiquitin-like domain; that stretch reads MSLNIHIKSG…SVHLVKSQPK (76 aa). Glycyl lysine isopeptide (Lys-Gly) (interchain with G-Cter in ubiquitin) cross-links involve residues lysine 13 and lysine 76. A disordered region spans residues 221–270; it reads DPNAGMGSAGGAASAFPAPGGDAPEEGSNTNTTSSSNTGNNAGTNAGTNA. Residues 231–270 show a composition bias toward low complexity; that stretch reads GAASAFPAPGGDAPEEGSNTNTTSSSNTGNNAGTNAGTNA. Residues 327–371 enclose the UBA domain; that stretch reads PPEERYEHQLRQLNDMGFFDFDRNVAALRRSGGSVQGALDSLLNG.

Its subcellular location is the nucleus. Functionally, involved, with RAD23 in spindle pole body duplication. Involved in the ubiquitin-proteasome proteolytic pathway. The chain is Ubiquitin domain-containing protein DSK2 (DSK2) from Saccharomyces cerevisiae (strain ATCC 204508 / S288c) (Baker's yeast).